The primary structure comprises 539 residues: 3-methylmercaptopropionyl-CoA ligase (539 aa).

Residue Thr-185 coordinates Mg(2+). 5 residues coordinate ATP: His-231, Gly-303, His-324, Ala-325, and Ser-329. Glu-330 is a Mg(2+) binding site. Residues Gln-359, Asp-417, Arg-432, and Lys-523 each contribute to the ATP site.

It belongs to the ATP-dependent AMP-binding enzyme family. In terms of assembly, homodimer. It depends on Mg(2+) as a cofactor.

It carries out the reaction 3-(methylsulfanyl)propanoate + ATP + CoA = 3-(methylsulfanyl)propanoyl-CoA + AMP + diphosphate. It participates in lipid metabolism; fatty acid metabolism. With respect to regulation, activated by LiCl and NH(4)Cl. Inhibited by dimethylsulfoniopropionate (DMSP). MMPA concentrations above 2 mM relieve the DMSP inhibition and 80% of activity is regained at an MMPA concentration of 8 mM. Functionally, involved in the assimilation of dimethylsulphoniopropionate (DMSP), an important compound in the fixation of carbon in marine phytoplankton. Catalyzes the ATP-dependent ligation of methylmercaptopropionate (MMPA) and CoA to yield methylmercaptopropionate-CoA (MMPA-CoA). It is also active with short-chain-fatty-acid (carboxylic acids up to six carbons in length). The chain is 3-methylmercaptopropionyl-CoA ligase from Ruegeria pomeroyi (strain ATCC 700808 / DSM 15171 / DSS-3) (Silicibacter pomeroyi).